We begin with the raw amino-acid sequence, 1235 residues long: JNK-interacting protein 3 (1235 aa).

The segment at 1–22 (MMDNDDALLNNGGPQSGAETVY) is disordered. The RH1 domain maps to 25-113 (EDNNMVMSEK…VTQYEREKSA (89 aa)). Residues 84-184 (RINQEQDVEL…NKLHERYTEL (101 aa)) are a coiled coil. The interval 278 to 325 (GAATDSLQQQHQATSPQSPPDTSPVVPNVPPANVGRSTTKKEQRSDNN) is disordered. Positions 282–293 (DSLQQQHQATSP) are enriched in polar residues. A compositionally biased stretch (pro residues) spans 294-307 (QSPPDTSPVVPNVP). A coiled-coil region spans residues 366-493 (GKEVENLIME…AVRLTEILRA (128 aa)). In terms of domain architecture, RH2 spans 456–526 (RKRFTRVEMA…TPSNRPTERI (71 aa)). Disordered stretches follow at residues 520–572 (NRPT…MHPA), 813–852 (KPKS…PVNA), and 869–897 (PGAP…STGS). The span at 529–543 (GLGGGPMFRNTGGGS) shows a compositional bias: gly residues. Low complexity-rich tracts occupy residues 544–555 (PAHSHGSPSRGS) and 821–830 (NSNSKPQQQQ). The span at 874–897 (RLSSGNSGSDGNQANNNNSSSTGS) shows a compositional bias: polar residues.

The protein belongs to the JIP scaffold family. Forms homo- and heterooligomeric complexes. Binds the TPR motif-containing C-terminal of kinesin light chain, Klc. Pre-assembled syd scaffolding complexes are then transported as a cargo of kinesin, to the required subcellular location.

The protein resides in the cytoplasm. In terms of biological role, the JNK-interacting protein (JIP) group of scaffold proteins selectively mediates JNK-signaling by aggregating specific components of the MAPK cascade to form a functional JNK signaling module. May function as a regulator of vesicle transport, through interactions with the JNK-signaling components and motor proteins. Syd is required for efficient kinesin-I mediated axonal transport. This Drosophila pseudoobscura pseudoobscura (Fruit fly) protein is JNK-interacting protein 3.